The sequence spans 235 residues: Small ribosomal subunit protein uS3 (235 aa).

Positions 39-107 (VRKFLNKELM…PAQINIAEVK (69 aa)) constitute a KH type-2 domain.

It belongs to the universal ribosomal protein uS3 family. In terms of assembly, part of the 30S ribosomal subunit. Forms a tight complex with proteins S10 and S14.

In terms of biological role, binds the lower part of the 30S subunit head. Binds mRNA in the 70S ribosome, positioning it for translation. The sequence is that of Small ribosomal subunit protein uS3 from Actinobacillus succinogenes (strain ATCC 55618 / DSM 22257 / CCUG 43843 / 130Z).